We begin with the raw amino-acid sequence, 427 residues long: Extracellular superoxide dismutase [Cu-Zn] 2 (427 aa).

Residues 1–20 (MNKLIISLLIVLSAISIISA) form the signal peptide. Residues 21–406 (DYQYGYCKFG…PTETSQPGTS (386 aa)) are Extracellular-facing. Asparagine 38, asparagine 57, asparagine 81, asparagine 190, and asparagine 218 each carry an N-linked (GlcNAc...) asparagine glycan. Positions 257, 259, and 275 each coordinate Cu cation. Zn(2+) is bound by residues histidine 275 and histidine 283. N-linked (GlcNAc...) asparagine glycosylation is present at asparagine 288. Zn(2+)-binding residues include histidine 292 and aspartate 295. Position 331 (histidine 331) interacts with Cu cation. Asparagine 376 carries N-linked (GlcNAc...) asparagine glycosylation. The segment at 381–404 (GESTIEPSPTPSTTPTPTETSQPG) is disordered. The segment covering 395–404 (PTPTETSQPG) has biased composition (low complexity). Residues 407–426 (SYLAPFFVLILSSLISVILI) form a helical membrane-spanning segment. Position 427 (leucine 427) is a topological domain, cytoplasmic.

This sequence belongs to the Cu-Zn superoxide dismutase family. It depends on Cu cation as a cofactor. The cofactor is Zn(2+).

It is found in the cell membrane. It carries out the reaction 2 superoxide + 2 H(+) = H2O2 + O2. In terms of biological role, protect the extracellular space from toxic effect of reactive oxygen intermediates by converting superoxyde radicals into hydrogen peroxyde and oxygen. This is Extracellular superoxide dismutase [Cu-Zn] 2 (sodB) from Dictyostelium discoideum (Social amoeba).